Consider the following 147-residue polypeptide: MIYWIFLGLAIIAEIIGTLSMKYASVSGEMTGHVVMYFMITGSYVMLSLAVKKVALGVAYALWEGIGILIITIFSVMWFGETLSPLKIAGLVTLIGGILLVKSGTRKPKQPNRHRGNRPPSVQGLKTQTTGHHKGVAVESGEHHAAA.

A run of 4 helical transmembrane segments spans residues 1–21 (MIYW…TLSM), 31–51 (TGHV…SLAV), 54–74 (VALG…ITIF), and 81–101 (ETLS…ILLV). Residues 105–117 (TRKPKQPNRHRGN) are compositionally biased toward basic residues. The tract at residues 105–147 (TRKPKQPNRHRGNRPPSVQGLKTQTTGHHKGVAVESGEHHAAA) is disordered.

It belongs to the drug/metabolite transporter (DMT) superfamily. Small multidrug resistance (SMR) (TC 2.A.7.1) family. MdtJ subfamily. Forms a complex with MdtI.

The protein localises to the cell inner membrane. Its function is as follows. Catalyzes the excretion of spermidine. The sequence is that of Spermidine export protein MdtJ from Yersinia pseudotuberculosis serotype IB (strain PB1/+).